The following is a 203-amino-acid chain: HTH-type transcriptional regulator BetI (203 aa).

In terms of domain architecture, HTH tetR-type spans 8 to 68; sequence PVRRKALVDA…ATIRSLLGKL (61 aa). A DNA-binding region (H-T-H motif) is located at residues 31–50; sequence TMSEIARTAGVSPALAHHYF.

It participates in amine and polyamine biosynthesis; betaine biosynthesis via choline pathway [regulation]. In terms of biological role, repressor involved in the biosynthesis of the osmoprotectant glycine betaine. It represses transcription of the choline transporter BetT and the genes of BetAB involved in the synthesis of glycine betaine. The sequence is that of HTH-type transcriptional regulator BetI from Rhizobium meliloti (strain 1021) (Ensifer meliloti).